Consider the following 182-residue polypeptide: Putative pre-16S rRNA nuclease (182 aa).

This sequence belongs to the YqgF nuclease family.

The protein localises to the cytoplasm. Could be a nuclease involved in processing of the 5'-end of pre-16S rRNA. The polypeptide is Putative pre-16S rRNA nuclease (Corynebacterium aurimucosum (strain ATCC 700975 / DSM 44827 / CIP 107346 / CN-1) (Corynebacterium nigricans)).